The following is a 343-amino-acid chain: UDP-3-O-acylglucosamine N-acyltransferase 2 (343 aa).

H251 functions as the Proton acceptor in the catalytic mechanism.

Belongs to the transferase hexapeptide repeat family. LpxD subfamily. As to quaternary structure, homotrimer.

The enzyme catalyses a UDP-3-O-[(3R)-3-hydroxyacyl]-alpha-D-glucosamine + a (3R)-hydroxyacyl-[ACP] = a UDP-2-N,3-O-bis[(3R)-3-hydroxyacyl]-alpha-D-glucosamine + holo-[ACP] + H(+). Its pathway is bacterial outer membrane biogenesis; LPS lipid A biosynthesis. Catalyzes the N-acylation of UDP-3-O-acylglucosamine using 3-hydroxyacyl-ACP as the acyl donor. Is involved in the biosynthesis of lipid A, a phosphorylated glycolipid that anchors the lipopolysaccharide to the outer membrane of the cell. The polypeptide is UDP-3-O-acylglucosamine N-acyltransferase 2 (Legionella pneumophila (strain Paris)).